The chain runs to 356 residues: Tyrosine recombinase XerS (356 aa).

The region spanning 16 to 121 (IMPWYVLDYY…ALSSLYKYLT (106 aa)) is the Core-binding (CB) domain. A Tyr recombinase domain is found at 169-354 (AFLDYVDKEY…VNDEQKTALD (186 aa)). Active-site residues include R210, K234, H306, R309, and H332. Y341 serves as the catalytic O-(3'-phospho-DNA)-tyrosine intermediate.

The protein belongs to the 'phage' integrase family. XerS subfamily.

The protein resides in the cytoplasm. FtsK is required for recombination. In terms of biological role, site-specific tyrosine recombinase, which acts by catalyzing the cutting and rejoining of the recombining DNA molecules. Essential to convert dimers of the bacterial chromosome into monomers to permit their segregation at cell division. This chain is Tyrosine recombinase XerS, found in Streptococcus pyogenes serotype M12 (strain MGAS9429).